We begin with the raw amino-acid sequence, 354 residues long: Putative Xaa-Pro aminopeptidase (354 aa).

Mn(2+)-binding residues include D213, D224, H290, E319, and E333.

The protein belongs to the peptidase M24B family. Mn(2+) serves as cofactor.

It carries out the reaction Release of any N-terminal amino acid, including proline, that is linked to proline, even from a dipeptide or tripeptide.. This Mycoplasma genitalium (strain ATCC 33530 / DSM 19775 / NCTC 10195 / G37) (Mycoplasmoides genitalium) protein is Putative Xaa-Pro aminopeptidase (pepP).